Consider the following 336-residue polypeptide: Phospho-N-acetylmuramoyl-pentapeptide-transferase (336 aa).

10 helical membrane passes run 3–23, 53–73, 78–98, 118–138, 143–163, 174–194, 200–220, 226–246, 251–271, and 316–336; these read LTLI…PYFI, GGTV…LFSI, SLAL…IGFL, LALQ…PSGI, VFGY…FWVV, GIDG…GVIA, FDVL…FCFN, VFMG…ISIA, WTLL…MLQV, and AFLW…LYVF.

It belongs to the glycosyltransferase 4 family. MraY subfamily. It depends on Mg(2+) as a cofactor.

The protein localises to the cell membrane. It carries out the reaction UDP-N-acetyl-alpha-D-muramoyl-L-alanyl-gamma-D-glutamyl-L-lysyl-D-alanyl-D-alanine + di-trans,octa-cis-undecaprenyl phosphate = Mur2Ac(oyl-L-Ala-gamma-D-Glu-L-Lys-D-Ala-D-Ala)-di-trans,octa-cis-undecaprenyl diphosphate + UMP. The protein operates within cell wall biogenesis; peptidoglycan biosynthesis. Its function is as follows. Catalyzes the initial step of the lipid cycle reactions in the biosynthesis of the cell wall peptidoglycan: transfers peptidoglycan precursor phospho-MurNAc-pentapeptide from UDP-MurNAc-pentapeptide onto the lipid carrier undecaprenyl phosphate, yielding undecaprenyl-pyrophosphoryl-MurNAc-pentapeptide, known as lipid I. The protein is Phospho-N-acetylmuramoyl-pentapeptide-transferase of Streptococcus pyogenes serotype M49 (strain NZ131).